We begin with the raw amino-acid sequence, 75 residues long: Small ribosomal subunit protein bS21B (75 aa).

Residues 33–52 (RRSYEKPSERRAREKAEAVR) are compositionally biased toward basic and acidic residues. The segment at 33–75 (RRSYEKPSERRAREKAEAVRRARKLARKQAQREGLLPGKKRAA) is disordered.

It belongs to the bacterial ribosomal protein bS21 family.

The sequence is that of Small ribosomal subunit protein bS21B from Chelativorans sp. (strain BNC1).